A 116-amino-acid polypeptide reads, in one-letter code: Nitrogen regulatory PII-like protein (116 aa).

Belongs to the P(II) protein family. In terms of assembly, needs to interact with NrgA in order to localize correctly to the membrane.

Its subcellular location is the cell membrane. Required for full induction of the nrgAB operon under conditions of ammonium limitation. This is Nitrogen regulatory PII-like protein (nrgB) from Bacillus subtilis (strain 168).